Here is a 75-residue protein sequence, read N- to C-terminus: Transcription attenuation protein MtrB (75 aa).

It belongs to the MtrB family. In terms of assembly, oligomer of 11 identical subunits arranged in doughnut-like structure.

Required for transcription attenuation control in the Trp operon. This trans-acting factor seems to recognize a 10 bases nucleotide sequence in the Trp leader transcript causing transcription termination. Binds the leader RNA only in presence of L-tryptophan. The polypeptide is Transcription attenuation protein MtrB (Bacillus velezensis (strain DSM 23117 / BGSC 10A6 / LMG 26770 / FZB42) (Bacillus amyloliquefaciens subsp. plantarum)).